A 499-amino-acid polypeptide reads, in one-letter code: L-asparagine permease (499 aa).

A run of 12 helical transmembrane segments spans residues 34-54 (QVQMIAIGGAIGTGLFLGAGA), 58-78 (MAGPALALVYLICGLFSFFIL), 109-129 (VAGWMYFINWAMTGIVDITAV), 146-166 (VFALAALTIVGTMNMIGVKWF), 171-191 (FWFALIKVLAIVTFLVVGTVF), 219-239 (LLPALVLIQGVVFAFASIEMV), 264-284 (IGLFYVGSVVLLVMLLPWSAY), 298-318 (LGVPYIGSIMNIVVLTAALSS), 353-373 (YAGILATLVVYVVGVFLNYLV), 378-398 (FEIVLNFASLGIIASWAFIIV), 422-442 (APFTSWLTLLFLLSVLVLMAF), and 448-468 (TYTIAALPIIGILLVIGWFGV).

It belongs to the amino acid-polyamine-organocation (APC) superfamily. Amino acid transporter (AAT) (TC 2.A.3.1) family.

It localises to the cell inner membrane. The protein is L-asparagine permease (ansP) of Escherichia coli (strain K12).